The sequence spans 102 residues: Small ribosomal subunit protein uS10 (102 aa).

Belongs to the universal ribosomal protein uS10 family. As to quaternary structure, part of the 30S ribosomal subunit.

In terms of biological role, involved in the binding of tRNA to the ribosomes. The sequence is that of Small ribosomal subunit protein uS10 from Carboxydothermus hydrogenoformans (strain ATCC BAA-161 / DSM 6008 / Z-2901).